The primary structure comprises 501 residues: DDB1- and CUL4-associated factor 12-like protein 1 (501 aa).

Positions 1–37 are enriched in polar residues; the sequence is MRQADSQTQPSPAEQETPQPAGPSNRSPPTMGPQQTG. A disordered region spans residues 1 to 67; sequence MRQADSQTQP…PAAPMATAGE (67 aa). 4 WD repeats span residues 185–225, 230–268, 298–337, and 384–423; these read PPSC…PVCL, GHRD…FNGS, PGNR…SRLL, and SREG…FLEE.

It belongs to the WD repeat DCAF12 family.

The polypeptide is DDB1- and CUL4-associated factor 12-like protein 1 (Dcaf12l1) (Mus musculus (Mouse)).